A 513-amino-acid chain; its full sequence is 2,3-bisphosphoglycerate-independent phosphoglycerate mutase (513 aa).

Positions 13 and 63 each coordinate Mn(2+). The active-site Phosphoserine intermediate is the Ser-63. Substrate is bound by residues His-124, 154-155 (RD), Arg-186, Arg-192, 262-265 (RADR), and Lys-335. Mn(2+)-binding residues include Asp-402, His-406, Asp-443, His-444, and His-462.

It belongs to the BPG-independent phosphoglycerate mutase family. Monomer. Requires Mn(2+) as cofactor.

It catalyses the reaction (2R)-2-phosphoglycerate = (2R)-3-phosphoglycerate. Its pathway is carbohydrate degradation; glycolysis; pyruvate from D-glyceraldehyde 3-phosphate: step 3/5. Catalyzes the interconversion of 2-phosphoglycerate and 3-phosphoglycerate. The protein is 2,3-bisphosphoglycerate-independent phosphoglycerate mutase of Photobacterium profundum (strain SS9).